The chain runs to 155 residues: Transcription antitermination protein NusB (155 aa).

It belongs to the NusB family.

Functionally, involved in transcription antitermination. Required for transcription of ribosomal RNA (rRNA) genes. Binds specifically to the boxA antiterminator sequence of the ribosomal RNA (rrn) operons. The chain is Transcription antitermination protein NusB from Halorhodospira halophila (strain DSM 244 / SL1) (Ectothiorhodospira halophila (strain DSM 244 / SL1)).